Consider the following 589-residue polypeptide: Ufm1-specific protease (589 aa).

The tract at residues methionine 1–proline 22 is disordered. Catalysis depends on residues cysteine 421, aspartate 545, and histidine 547.

The protein belongs to the peptidase C78 family. As to quaternary structure, interacts with odr-4. As to expression, expressed in head and tail neurons. Expressed in the amphid head neurons ADL, ASI, ASH, ASJ, ASG, ADF, ASK, AWA, AWB, AWC, and in two tail neurons, the phasmid tail neurons PHA and PHB.

The protein resides in the endoplasmic reticulum membrane. It is found in the cytoplasm. Its subcellular location is the perinuclear region. In terms of biological role, thiol protease which recognizes and hydrolyzes the peptide bond at the C-terminal Gly of ufm-1, a ubiquitin-like modifier protein bound to a number of target proteins. Required, with oct-4, for the localization of a subset of 7 transmembrane domain odorant receptors, including odr-10, to the cilia of olfactory neurons AWA and AWC. Operates in aggregation behavior, and responses to oxygen levels. This is Ufm1-specific protease from Caenorhabditis elegans.